The sequence spans 140 residues: Ribonuclease P protein component (140 aa).

A disordered region spans residues 33–54 (RALKPSSAKKSSLDTAAKTQPA).

This sequence belongs to the RnpA family. As to quaternary structure, consists of a catalytic RNA component (M1 or rnpB) and a protein subunit.

The catalysed reaction is Endonucleolytic cleavage of RNA, removing 5'-extranucleotides from tRNA precursor.. RNaseP catalyzes the removal of the 5'-leader sequence from pre-tRNA to produce the mature 5'-terminus. It can also cleave other RNA substrates such as 4.5S RNA. The protein component plays an auxiliary but essential role in vivo by binding to the 5'-leader sequence and broadening the substrate specificity of the ribozyme. The protein is Ribonuclease P protein component of Trichormus variabilis (strain ATCC 29413 / PCC 7937) (Anabaena variabilis).